The following is a 250-amino-acid chain: NAD-dependent protein deacylase 1 (250 aa).

The region spanning 1-250 is the Deacetylase sirtuin-type domain; that stretch reads MRAVVELLAG…PELLRRAFPG (250 aa). 19–39 is an NAD(+) binding site; the sequence is GAGVSAESGIPTFRDALGGLW. Substrate-binding residues include Tyr-64 and Arg-67. 98-101 provides a ligand contact to NAD(+); sequence QNVD. The Proton acceptor role is filled by His-116. Positions 124, 127, 152, and 155 each coordinate Zn(2+). Residues 192–194, 218–220, and Ala-236 contribute to the NAD(+) site; these read GTS and NPQ.

This sequence belongs to the sirtuin family. Class III subfamily. Zn(2+) is required as a cofactor.

Its subcellular location is the cytoplasm. The enzyme catalyses N(6)-acetyl-L-lysyl-[protein] + NAD(+) + H2O = 2''-O-acetyl-ADP-D-ribose + nicotinamide + L-lysyl-[protein]. It carries out the reaction N(6)-succinyl-L-lysyl-[protein] + NAD(+) + H2O = 2''-O-succinyl-ADP-D-ribose + nicotinamide + L-lysyl-[protein]. NAD-dependent lysine deacetylase and desuccinylase that specifically removes acetyl and succinyl groups on target proteins. Modulates the activities of several proteins which are inactive in their acylated form. This chain is NAD-dependent protein deacylase 1, found in Pseudomonas aeruginosa (strain ATCC 15692 / DSM 22644 / CIP 104116 / JCM 14847 / LMG 12228 / 1C / PRS 101 / PAO1).